We begin with the raw amino-acid sequence, 390 residues long: Probable inactive secreted aspartyl protease (390 aa).

An N-terminal signal peptide occupies residues 1–20; sequence MQLTIKALVGILTTISAATA. Positions 21–69 are cleaved as a propeptide — removed in mature form; that stretch reads VSFDMENLGAEKRGVSGEELHMLHGNEVLARFANGVYPEVANGTRVSKR. N-linked (GlcNAc...) asparagine glycosylation occurs at Asn62. The Peptidase A1 domain occupies 86–388; that stretch reads WAVKAKIGSN…KFDSNEMQIA (303 aa). Catalysis depends on residues Asp104 and Asp273. A disulfide bridge connects residues Cys313 and Cys346.

It belongs to the peptidase A1 family.

The protein resides in the secreted. In terms of biological role, probable inactive secreted aspartyl protease. May promote an inflammatory immune response in the host when the host skin barrier is breached. Has no detectable protease activity in vitro on fluorogenic substrates, a peptide library, or with the general protease substrate casein. The presence of the enzyme also does not affect the activity of the secreted aspartyl protease SAP1. This is Probable inactive secreted aspartyl protease from Malassezia globosa (strain ATCC MYA-4612 / CBS 7966) (Dandruff-associated fungus).